We begin with the raw amino-acid sequence, 89 residues long: Large ribosomal subunit protein bL27 (89 aa).

A disordered region spans residues 1–26; it reads MATKKAGGSSKNGRDSAGRRLGLKKS.

This sequence belongs to the bacterial ribosomal protein bL27 family.

This chain is Large ribosomal subunit protein bL27, found in Orientia tsutsugamushi (strain Ikeda) (Rickettsia tsutsugamushi).